Consider the following 307-residue polypeptide: uncharacterized protein (307 aa).

8 consecutive transmembrane segments (helical) span residues 1 to 21, 52 to 72, 99 to 119, 133 to 153, 174 to 194, 208 to 228, 242 to 262, and 277 to 297; these read MLIL…MNML, IVFT…IGFV, FIAI…LLFF, FLGL…AGPL, LLIG…IGIL, AMSV…MAAV, VVFN…ATGF, and FSLL…NLFY.

It is found in the cell membrane. This is an uncharacterized protein from Bacillus subtilis (strain 168).